We begin with the raw amino-acid sequence, 406 residues long: UPF0754 membrane protein CYA_0973 (406 aa).

Transmembrane regions (helical) follow at residues 1-21 (MALW…YFTN) and 385-405 (IVNL…LFLL).

It belongs to the UPF0754 family.

The protein resides in the cell inner membrane. This chain is UPF0754 membrane protein CYA_0973, found in Synechococcus sp. (strain JA-3-3Ab) (Cyanobacteria bacterium Yellowstone A-Prime).